We begin with the raw amino-acid sequence, 80 residues long: Cytochrome c oxidase subunit 7B, mitochondrial (80 aa).

The transit peptide at 1 to 24 (MFPLVKNALNRLQVRSIQQTMARQ) directs the protein to the mitochondrion. The Mitochondrial matrix segment spans residues 25–32 (SHQKRTPD). Residues 33–59 (FHDKYGNAVLASGATFCIVTWTYVATQ) form a helical membrane-spanning segment. Over 60–80 (VGIEWNLSPVGRVTPKEWRNQ) the chain is Mitochondrial intermembrane.

The protein belongs to the cytochrome c oxidase VIIb family. As to quaternary structure, component of the cytochrome c oxidase (complex IV, CIV), a multisubunit enzyme composed of 14 subunits. The complex is composed of a catalytic core of 3 subunits MT-CO1, MT-CO2 and MT-CO3, encoded in the mitochondrial DNA, and 11 supernumerary subunits COX4I, COX5A, COX5B, COX6A, COX6B, COX6C, COX7A, COX7B, COX7C, COX8 and NDUFA4, which are encoded in the nuclear genome. The complex exists as a monomer or a dimer and forms supercomplexes (SCs) in the inner mitochondrial membrane with NADH-ubiquinone oxidoreductase (complex I, CI) and ubiquinol-cytochrome c oxidoreductase (cytochrome b-c1 complex, complex III, CIII), resulting in different assemblies (supercomplex SCI(1)III(2)IV(1) and megacomplex MCI(2)III(2)IV(2)).

The protein localises to the mitochondrion inner membrane. The protein operates within energy metabolism; oxidative phosphorylation. Component of the cytochrome c oxidase, the last enzyme in the mitochondrial electron transport chain which drives oxidative phosphorylation. The respiratory chain contains 3 multisubunit complexes succinate dehydrogenase (complex II, CII), ubiquinol-cytochrome c oxidoreductase (cytochrome b-c1 complex, complex III, CIII) and cytochrome c oxidase (complex IV, CIV), that cooperate to transfer electrons derived from NADH and succinate to molecular oxygen, creating an electrochemical gradient over the inner membrane that drives transmembrane transport and the ATP synthase. Cytochrome c oxidase is the component of the respiratory chain that catalyzes the reduction of oxygen to water. Electrons originating from reduced cytochrome c in the intermembrane space (IMS) are transferred via the dinuclear copper A center (CU(A)) of subunit 2 and heme A of subunit 1 to the active site in subunit 1, a binuclear center (BNC) formed by heme A3 and copper B (CU(B)). The BNC reduces molecular oxygen to 2 water molecules using 4 electrons from cytochrome c in the IMS and 4 protons from the mitochondrial matrix. Plays a role in proper central nervous system (CNS) development in vertebrates. The chain is Cytochrome c oxidase subunit 7B, mitochondrial (COX7B) from Pongo abelii (Sumatran orangutan).